The chain runs to 234 residues: tRNA (guanine-N(1)-)-methyltransferase (234 aa).

Residues Gly-112 and 132–137 each bind S-adenosyl-L-methionine; that span reads IGDFIL.

It belongs to the RNA methyltransferase TrmD family. Homodimer.

The protein localises to the cytoplasm. The enzyme catalyses guanosine(37) in tRNA + S-adenosyl-L-methionine = N(1)-methylguanosine(37) in tRNA + S-adenosyl-L-homocysteine + H(+). Specifically methylates guanosine-37 in various tRNAs. This chain is tRNA (guanine-N(1)-)-methyltransferase, found in Campylobacter jejuni subsp. jejuni serotype O:6 (strain 81116 / NCTC 11828).